Here is a 353-residue protein sequence, read N- to C-terminus: uncharacterized protein (353 aa).

Residues 233–245 (ASCSNNEPSASLE) are compositionally biased toward polar residues. The tract at residues 233-265 (ASCSNNEPSASLESESRHFSPVNSLSPSSLSTD) is disordered. The span at 252-263 (SPVNSLSPSSLS) shows a compositional bias: low complexity.

This is an uncharacterized protein from Saccharomyces cerevisiae (strain ATCC 204508 / S288c) (Baker's yeast).